Consider the following 223-residue polypeptide: Ribonuclease 3 (223 aa).

The RNase III domain maps to Leu-4–Gly-127. Glu-40 serves as a coordination point for Mg(2+). Asp-44 is a catalytic residue. Residues Asp-113 and Glu-116 each contribute to the Mg(2+) site. The active site involves Glu-116. Positions Asp-154 to Lys-223 constitute a DRBM domain.

Belongs to the ribonuclease III family. As to quaternary structure, homodimer. The cofactor is Mg(2+).

It is found in the cytoplasm. It catalyses the reaction Endonucleolytic cleavage to 5'-phosphomonoester.. Digests double-stranded RNA. Involved in the processing of primary rRNA transcript to yield the immediate precursors to the large and small rRNAs (23S and 16S). Processes some mRNAs, and tRNAs when they are encoded in the rRNA operon. Processes pre-crRNA and tracrRNA of type II CRISPR loci if present in the organism. The protein is Ribonuclease 3 of Campylobacter concisus (strain 13826).